The sequence spans 404 residues: Cysteine desulfurase IscS (404 aa).

Residues 75-76, N155, Q183, and 203-205 contribute to the pyridoxal 5'-phosphate site; these read AT and SGH. K206 is subject to N6-(pyridoxal phosphate)lysine. T243 serves as a coordination point for pyridoxal 5'-phosphate. Catalysis depends on C328, which acts as the Cysteine persulfide intermediate. Position 328 (C328) interacts with [2Fe-2S] cluster.

It belongs to the class-V pyridoxal-phosphate-dependent aminotransferase family. NifS/IscS subfamily. Homodimer. Forms a heterotetramer with IscU, interacts with other sulfur acceptors. The cofactor is pyridoxal 5'-phosphate.

It is found in the cytoplasm. It carries out the reaction (sulfur carrier)-H + L-cysteine = (sulfur carrier)-SH + L-alanine. Its pathway is cofactor biosynthesis; iron-sulfur cluster biosynthesis. Functionally, master enzyme that delivers sulfur to a number of partners involved in Fe-S cluster assembly, tRNA modification or cofactor biosynthesis. Catalyzes the removal of elemental sulfur atoms from cysteine to produce alanine. Functions as a sulfur delivery protein for Fe-S cluster synthesis onto IscU, an Fe-S scaffold assembly protein, as well as other S acceptor proteins. The sequence is that of Cysteine desulfurase IscS from Klebsiella pneumoniae subsp. pneumoniae (strain ATCC 700721 / MGH 78578).